A 382-amino-acid chain; its full sequence is Chaperone protein DnaJ (382 aa).

The J domain occupies 5–69 (DLYGVLGVAK…QKRANYDQSG (65 aa)). Residues 104–123 (QFFGGGGGQRNPNAPRPGRD) form a disordered region. Residues 138-220 (GKKTKIKYNR…CGGSGHEEER (83 aa)) form a CR-type zinc finger. The Zn(2+) site is built by Cys151, Cys154, Cys168, Cys171, Cys194, Cys197, Cys208, and Cys211. CXXCXGXG motif repeat units follow at residues 151 to 158 (CHTCGGNG), 168 to 175 (CHQCGGSG), 194 to 201 (CPVCHGTG), and 208 to 215 (CPTCGGSG). A disordered region spans residues 358 to 382 (ASGESVTGSGKGNLFNKMRDKFNEN).

It belongs to the DnaJ family. As to quaternary structure, homodimer. The cofactor is Zn(2+).

It localises to the cytoplasm. Its function is as follows. Participates actively in the response to hyperosmotic and heat shock by preventing the aggregation of stress-denatured proteins and by disaggregating proteins, also in an autonomous, DnaK-independent fashion. Unfolded proteins bind initially to DnaJ; upon interaction with the DnaJ-bound protein, DnaK hydrolyzes its bound ATP, resulting in the formation of a stable complex. GrpE releases ADP from DnaK; ATP binding to DnaK triggers the release of the substrate protein, thus completing the reaction cycle. Several rounds of ATP-dependent interactions between DnaJ, DnaK and GrpE are required for fully efficient folding. Also involved, together with DnaK and GrpE, in the DNA replication of plasmids through activation of initiation proteins. The polypeptide is Chaperone protein DnaJ (Levilactobacillus brevis (strain ATCC 367 / BCRC 12310 / CIP 105137 / JCM 1170 / LMG 11437 / NCIMB 947 / NCTC 947) (Lactobacillus brevis)).